The primary structure comprises 425 residues: SWI5-dependent HO expression protein 3 (425 aa).

The tract at residues 24–45 (NLESSPTKDRNTSSQNASSSRV) is disordered. Positions 35–45 (TSSQNASSSRV) are enriched in polar residues. A coiled-coil region spans residues 68 to 197 (QNLLSKLELA…LELSNQNLNY (130 aa)). The segment at 322–425 (RKTPNTNDSS…NSMVVHGAQS (104 aa)) is disordered. Residues 326-338 (NTNDSSSNGNSSN) are compositionally biased toward low complexity. Ser-343 carries the post-translational modification Phosphoserine. Polar residues-rich tracts occupy residues 345 to 358 (YTASPLLSSGSIPK) and 382 to 397 (KTNVTHNNDPSTSPTI). Phosphoserine is present on Ser-394.

Belongs to the SHE3 family. In terms of assembly, interacts with SHE2 and MYO4.

It is found in the endoplasmic reticulum membrane. In terms of biological role, RNA-binding protein that binds specific mRNAs including the ASH1 mRNA, coding for a repressor of the HO endonuclease. Part of the mRNA localization machinery that restricts accumulation of certain proteins to the bud and in the daughter cell. Required for the delivery of cortical endoplasmic reticulum into the emerging bud. In Saccharomyces cerevisiae (strain ATCC 204508 / S288c) (Baker's yeast), this protein is SWI5-dependent HO expression protein 3 (SHE3).